Here is a 520-residue protein sequence, read N- to C-terminus: Polyprenol-phosphate-mannose--protein mannosyltransferase (520 aa).

10 helical membrane-spanning segments follow: residues 38-58, 119-139, 145-165, 168-188, 237-257, 274-294, 388-408, 418-438, 441-461, and 485-505; these read WAIIAVFALVTRFTGLSSATA, LGWRIMVAIFGTLTIFAIMAI, GSTMVTFIAGILALADGVLLV, RFGMLDIFLVFFITAAAWALI, WSGLYYIAFFGLTSVFLDLWL, DVIPALGSLVIIPALLYIWSW, IYLFGTPAIWWLTVPVILWAL, GYVVPLVAFAAGFLPWLAAYD, MYFFYATALVPFTIIMLALAC, and YISLVVMMFLAFSPLFYGFVI.

This sequence belongs to the glycosyltransferase 39 family.

The protein localises to the cell membrane. Its pathway is protein modification; protein glycosylation. In terms of biological role, protein O-mannosyltransferase that catalyzes the transfer of a single mannose residue from a polyprenol phospho-mannosyl lipidic donor to the hydroxyl group of selected serine and threonine residues in acceptor proteins. The sequence is that of Polyprenol-phosphate-mannose--protein mannosyltransferase (pmt) from Corynebacterium glutamicum (strain ATCC 13032 / DSM 20300 / JCM 1318 / BCRC 11384 / CCUG 27702 / LMG 3730 / NBRC 12168 / NCIMB 10025 / NRRL B-2784 / 534).